The chain runs to 175 residues: Shikimate kinase (175 aa).

Gly16–Thr21 is a binding site for ATP. Ser20 contacts Mg(2+). Asp38, Arg62, and Gly84 together coordinate substrate. Arg122 is a binding site for ATP. Arg141 contacts substrate.

It belongs to the shikimate kinase family. Monomer. Mg(2+) is required as a cofactor.

The protein resides in the cytoplasm. The enzyme catalyses shikimate + ATP = 3-phosphoshikimate + ADP + H(+). It functions in the pathway metabolic intermediate biosynthesis; chorismate biosynthesis; chorismate from D-erythrose 4-phosphate and phosphoenolpyruvate: step 5/7. In terms of biological role, catalyzes the specific phosphorylation of the 3-hydroxyl group of shikimic acid using ATP as a cosubstrate. The chain is Shikimate kinase from Legionella pneumophila (strain Paris).